The chain runs to 606 residues: Limonene synthase, chloroplastic (606 aa).

The transit peptide at 1-38 directs the protein to the chloroplast; it reads MAIINLPVPTNSSSEVNKHNHLRSCLPSGRATFTTLSA. Residues Arg320, Asp357, Asp361, Arg497, and Asp500 each contribute to the (2E)-geranyl diphosphate site. Residues Asp357 and Asp361 each contribute to the Mg(2+) site. The short motif at 357–361 is the DDXXD motif element; sequence DDIYD. 3 residues coordinate Mg(2+): Asp500, Thr504, and Glu508.

It belongs to the terpene synthase family. Tpsb subfamily. Monomer. The cofactor is Mg(2+). Mn(2+) is required as a cofactor. Confined to fruits.

It localises to the plastid. The protein localises to the chloroplast. It carries out the reaction (2E,6E)-farnesyl diphosphate = (E)-beta-farnesene + diphosphate. The enzyme catalyses (2E)-geranyl diphosphate = limonene + diphosphate. The catalysed reaction is (2E)-geranyl diphosphate = beta-pinene + diphosphate. It catalyses the reaction (2E)-geranyl diphosphate = sabinene + diphosphate. It carries out the reaction (2E)-geranyl diphosphate = beta-myrcene + diphosphate. The enzyme catalyses (2E)-geranyl diphosphate = alpha-pinene + diphosphate. The catalysed reaction is (2E)-geranyl diphosphate = terpinolene + diphosphate. It participates in secondary metabolite biosynthesis; terpenoid biosynthesis. In terms of biological role, monoterpene synthase (mono-TPS) involved in the biosynthesis of monoterpenes natural products, constituent of coffee beverage aroma. Catalyzes the conversion of (2E)-geranyl diphosphate (GPP) into limonene, beta-pinene, sabinene and beta-myrcene, and, as minor products, alpha-pinene and alpha-terpinolene. Can also, with a low efficiency, use farnesyl pyrophosphate (FPP) as substrate to produce beta-farnesene. Not able to use geranylgeranyl pyrophosphate (GGPP) as substrate. This Coffea arabica (Arabian coffee) protein is Limonene synthase, chloroplastic.